Reading from the N-terminus, the 103-residue chain is Putative membrane protein insertion efficiency factor (103 aa).

The protein belongs to the UPF0161 family.

It localises to the cell inner membrane. In terms of biological role, could be involved in insertion of integral membrane proteins into the membrane. This chain is Putative membrane protein insertion efficiency factor, found in Chlamydia felis (strain Fe/C-56) (Chlamydophila felis).